We begin with the raw amino-acid sequence, 23 residues long: uncharacterized protein (23 aa).

The chain crosses the membrane as a helical span at residues 3–23; it reads YFFMGISFMVIVWAGTFALMI.

It localises to the cell inner membrane. This is an uncharacterized protein from Escherichia coli (strain K12).